The following is an 85-amino-acid chain: Large ribosomal subunit protein bL27 (85 aa).

A disordered region spans residues 1-21; the sequence is MAHKKGVGSTRNGRDSESKRL.

Belongs to the bacterial ribosomal protein bL27 family.

In Geobacter sulfurreducens (strain ATCC 51573 / DSM 12127 / PCA), this protein is Large ribosomal subunit protein bL27.